Consider the following 377-residue polypeptide: Peptide chain release factor 2 (377 aa).

Q257 bears the N5-methylglutamine mark.

Belongs to the prokaryotic/mitochondrial release factor family. Methylated by PrmC. Methylation increases the termination efficiency of RF2.

It is found in the cytoplasm. Functionally, peptide chain release factor 2 directs the termination of translation in response to the peptide chain termination codons UGA and UAA. This is Peptide chain release factor 2 from Lactiplantibacillus plantarum (strain ATCC BAA-793 / NCIMB 8826 / WCFS1) (Lactobacillus plantarum).